The sequence spans 211 residues: Ribosomal RNA small subunit methyltransferase G (211 aa).

S-adenosyl-L-methionine is bound by residues Gly-79, Leu-84, Val-130 to Glu-131, and Arg-145.

The protein belongs to the methyltransferase superfamily. RNA methyltransferase RsmG family.

Its subcellular location is the cytoplasm. The enzyme catalyses guanosine(527) in 16S rRNA + S-adenosyl-L-methionine = N(7)-methylguanosine(527) in 16S rRNA + S-adenosyl-L-homocysteine. In terms of biological role, specifically methylates the N7 position of guanine in position 527 of 16S rRNA. The protein is Ribosomal RNA small subunit methyltransferase G of Alteromonas mediterranea (strain DSM 17117 / CIP 110805 / LMG 28347 / Deep ecotype).